The primary structure comprises 183 residues: Glutamyl-tRNA(Gln) amidotransferase subunit F, mitochondrial (183 aa).

This sequence belongs to the GatF family. Subunit of the heterotrimeric GatFAB amidotransferase (AdT) complex, composed of A (HER2), B (PET112) and F (YGR102C) subunits.

Its subcellular location is the mitochondrion inner membrane. The enzyme catalyses L-glutamyl-tRNA(Gln) + L-glutamine + ATP + H2O = L-glutaminyl-tRNA(Gln) + L-glutamate + ADP + phosphate + H(+). In terms of biological role, allows the formation of correctly charged Gln-tRNA(Gln) through the transamidation of misacylated Glu-tRNA(Gln) in the mitochondria. The reaction takes place in the presence of glutamine and ATP through an activated gamma-phospho-Glu-tRNA(Gln). Required for proper protein synthesis within the mitochondrion. This is Glutamyl-tRNA(Gln) amidotransferase subunit F, mitochondrial from Saccharomyces cerevisiae (strain ATCC 204508 / S288c) (Baker's yeast).